Consider the following 360-residue polypeptide: Histidinol-phosphate aminotransferase (360 aa).

Lys-208 bears the N6-(pyridoxal phosphate)lysine mark.

Belongs to the class-II pyridoxal-phosphate-dependent aminotransferase family. Histidinol-phosphate aminotransferase subfamily. As to quaternary structure, homodimer. Pyridoxal 5'-phosphate serves as cofactor.

It catalyses the reaction L-histidinol phosphate + 2-oxoglutarate = 3-(imidazol-4-yl)-2-oxopropyl phosphate + L-glutamate. The protein operates within amino-acid biosynthesis; L-histidine biosynthesis; L-histidine from 5-phospho-alpha-D-ribose 1-diphosphate: step 7/9. This chain is Histidinol-phosphate aminotransferase (hisC), found in Lactococcus lactis subsp. lactis (strain IL1403) (Streptococcus lactis).